Consider the following 219-residue polypeptide: Probable nicotinate-nucleotide adenylyltransferase (219 aa).

The protein belongs to the NadD family.

It catalyses the reaction nicotinate beta-D-ribonucleotide + ATP + H(+) = deamido-NAD(+) + diphosphate. Its pathway is cofactor biosynthesis; NAD(+) biosynthesis; deamido-NAD(+) from nicotinate D-ribonucleotide: step 1/1. In terms of biological role, catalyzes the reversible adenylation of nicotinate mononucleotide (NaMN) to nicotinic acid adenine dinucleotide (NaAD). This is Probable nicotinate-nucleotide adenylyltransferase from Herminiimonas arsenicoxydans.